Reading from the N-terminus, the 89-residue chain is Large ribosomal subunit protein bL27 (89 aa).

The interval 1-21 (MAHKKAGGSSRNGRDSESKRL) is disordered.

Belongs to the bacterial ribosomal protein bL27 family.

This is Large ribosomal subunit protein bL27 from Chelativorans sp. (strain BNC1).